A 237-amino-acid chain; its full sequence is MIASLDELYHSELFFLPVMDENARLVGLEIIATFAAEDGAVRMPTELVAPRLSVEEQYCLFVEKLALLETCQHFFIQHKLIAWLNLPPAISDLLLLDSELFSRAARFPFFEVAINENYPGLNQGKNNETLANLAMHFPLILANFGAGEASTKAIFDGLFKRVMLDKNFIQQRAEMISFEPFMHAIVAQISSSCESLMIAGIDTEAMFARAAPLGFSAFQGGLWPPVPVSQLIKLVQR.

The EAL domain occupies 1-237; sequence MIASLDELYH…VSQLIKLVQR (237 aa).

The protein belongs to the YdiV family. In terms of assembly, interacts with FlhD in the FlhC(2)FlhD(4) heterohexamer, inhibiting its ability to activate transcription.

Acts as an anti-FlhC(2)FlhD(4) factor by binding to FlhD, decreasing its ability to bind DNA, and thus negatively regulates expression of flagellar class II operons, decreasing motility in nutrient-poor medium. Required for resistance to host phagocyte oxidase. The protein is Anti-FlhC(2)FlhD(4) factor YdiV (ydiV) of Salmonella typhi.